The sequence spans 543 residues: Reticulophagy regulator 2 (543 aa).

3 helical membrane-spanning segments follow: residues 12-32 (AGGGPGMGLSLGLGLGLSLGM), 100-120 (SLRPFFLLSVSLLAYFLLDLW), and 204-224 (VPGIMISYIVLLSILLWPLVV). The segment covering 254–265 (LHHKHDKRKRQG) has biased composition (basic residues). The tract at residues 254–287 (LHHKHDKRKRQGKNAPPGGDEPLAETESESEAEL) is disordered. Residues 275–285 (PLAETESESEA) show a composition bias toward acidic residues. Thr279 carries the post-translational modification Phosphothreonine. A phosphoserine mark is found at Ser281, Ser283, Ser291, and Ser311. Thr334 is subject to Phosphothreonine. 2 disordered regions span residues 336–394 (VSED…DVAA) and 411–486 (HFNG…EEEA). Phosphoserine occurs at positions 337, 344, 347, and 385. Positions 461 to 480 (APSPSILPPVPQDSPQPLPA) are enriched in pro residues. The LIR motif signature appears at 490-495 (EDFELL). The interval 504–543 (NAELGLEPETPPKPPDAPPLGPDIHSLVQSDQEAQAVAEP) is disordered. Residues 512 to 524 (ETPPKPPDAPPLG) show a composition bias toward pro residues.

This sequence belongs to the RETREG family. In terms of assembly, interacts with ATG8 family modifier proteins MAP1LC3A, MAP1LC3B, MAP1LC3C, GABARAP, GABARAPL1 and GABARAPL2. Shows higher affinity for GABARAPL1 than for MAP1LC3B. Interacts with CANX.

The protein resides in the endoplasmic reticulum membrane. Its function is as follows. Endoplasmic reticulum (ER)-anchored autophagy regulator which exists in an inactive state under basal conditions but is activated following cellular stress. When activated, induces ER fragmentation and mediates ER delivery into lysosomes through sequestration into autophagosomes via interaction with ATG8 family proteins. Required for collagen quality control in a LIR motif-independent manner. The protein is Reticulophagy regulator 2 of Homo sapiens (Human).